A 100-amino-acid chain; its full sequence is UPF0213 protein YhbQ (100 aa).

Residues 2-77 enclose the GIY-YIG domain; it reads TPWFLYLIRT…KQLTKRQKER (76 aa).

Belongs to the UPF0213 family.

This is UPF0213 protein YhbQ from Escherichia coli O7:K1 (strain IAI39 / ExPEC).